The sequence spans 184 residues: Potassium-transporting ATPase KdpC subunit (184 aa).

Residues 6 to 26 (TAVLYTIISAVFLGLGYPLIM) form a helical membrane-spanning segment.

This sequence belongs to the KdpC family. The system is composed of three essential subunits: KdpA, KdpB and KdpC.

The protein resides in the cell inner membrane. Part of the high-affinity ATP-driven potassium transport (or Kdp) system, which catalyzes the hydrolysis of ATP coupled with the electrogenic transport of potassium into the cytoplasm. This subunit acts as a catalytic chaperone that increases the ATP-binding affinity of the ATP-hydrolyzing subunit KdpB by the formation of a transient KdpB/KdpC/ATP ternary complex. This Acidobacterium capsulatum (strain ATCC 51196 / DSM 11244 / BCRC 80197 / JCM 7670 / NBRC 15755 / NCIMB 13165 / 161) protein is Potassium-transporting ATPase KdpC subunit.